A 424-amino-acid polypeptide reads, in one-letter code: UDP-N-acetylglucosamine 1-carboxyvinyltransferase 3 (424 aa).

22-23 provides a ligand contact to phosphoenolpyruvate; that stretch reads KN. UDP-N-acetyl-alpha-D-glucosamine is bound at residue Arg94. Catalysis depends on Asp118, which acts as the Proton donor. UDP-N-acetyl-alpha-D-glucosamine contacts are provided by residues 123 to 127, Asp306, and Leu328; that span reads RPVDQ.

Belongs to the EPSP synthase family. MurA subfamily.

Its subcellular location is the cytoplasm. It catalyses the reaction phosphoenolpyruvate + UDP-N-acetyl-alpha-D-glucosamine = UDP-N-acetyl-3-O-(1-carboxyvinyl)-alpha-D-glucosamine + phosphate. Its pathway is cell wall biogenesis; peptidoglycan biosynthesis. Functionally, cell wall formation. Adds enolpyruvyl to UDP-N-acetylglucosamine. The sequence is that of UDP-N-acetylglucosamine 1-carboxyvinyltransferase 3 from Symbiobacterium thermophilum (strain DSM 24528 / JCM 14929 / IAM 14863 / T).